Reading from the N-terminus, the 139-residue chain is Sec-independent protein translocase protein TatB (139 aa).

A helical membrane pass occupies residues 1-21; sequence MFDMGFLELMLIGVVALLVLG. The span at 66–86 shows a compositional bias: basic and acidic residues; sequence QQRKLDAGLGKVRDEVERHGD. The segment at 66–139 is disordered; sequence QQRKLDAGLG…APSAKDSNAP (74 aa).

This sequence belongs to the TatB family. In terms of assembly, the Tat system comprises two distinct complexes: a TatABC complex, containing multiple copies of TatA, TatB and TatC subunits, and a separate TatA complex, containing only TatA subunits. Substrates initially bind to the TatABC complex, which probably triggers association of the separate TatA complex to form the active translocon.

The protein resides in the cell inner membrane. Functionally, part of the twin-arginine translocation (Tat) system that transports large folded proteins containing a characteristic twin-arginine motif in their signal peptide across membranes. Together with TatC, TatB is part of a receptor directly interacting with Tat signal peptides. TatB may form an oligomeric binding site that transiently accommodates folded Tat precursor proteins before their translocation. This chain is Sec-independent protein translocase protein TatB, found in Chromohalobacter salexigens (strain ATCC BAA-138 / DSM 3043 / CIP 106854 / NCIMB 13768 / 1H11).